Consider the following 1257-residue polypeptide: Pesticidal crystal protein Cry12Aa (1257 aa).

This sequence belongs to the delta endotoxin family.

Endotoxin with nematicidal activity. In Bacillus thuringiensis, this protein is Pesticidal crystal protein Cry12Aa (cry12Aa).